The sequence spans 253 residues: 5'-nucleotidase SurE (253 aa).

A divalent metal cation-binding residues include Asp8, Asp9, Ser39, and Asn92.

Belongs to the SurE nucleotidase family. Requires a divalent metal cation as cofactor.

It is found in the cytoplasm. It catalyses the reaction a ribonucleoside 5'-phosphate + H2O = a ribonucleoside + phosphate. Its function is as follows. Nucleotidase that shows phosphatase activity on nucleoside 5'-monophosphates. The sequence is that of 5'-nucleotidase SurE from Burkholderia pseudomallei (strain 668).